The sequence spans 309 residues: Carbamate kinase 2 (309 aa).

Belongs to the carbamate kinase family.

The protein resides in the cytoplasm. The catalysed reaction is hydrogencarbonate + NH4(+) + ATP = carbamoyl phosphate + ADP + H2O + H(+). It functions in the pathway metabolic intermediate metabolism; carbamoyl phosphate degradation; CO(2) and NH(3) from carbamoyl phosphate: step 1/1. The sequence is that of Carbamate kinase 2 (arcC2) from Staphylococcus epidermidis (strain ATCC 12228 / FDA PCI 1200).